The primary structure comprises 118 residues: Beta-2-microglobulin (118 aa).

An N-terminal signal peptide occupies residues Met-1 to Ala-20. The Ig-like C1-type domain occupies Pro-25 to Val-112. Residues Cys-45 and Cys-99 are joined by a disulfide bond.

It belongs to the beta-2-microglobulin family. As to quaternary structure, heterodimer of an alpha chain and a beta chain. Beta-2-microglobulin is the beta-chain of major histocompatibility complex class I molecules.

The protein resides in the secreted. Its function is as follows. Component of the class I major histocompatibility complex (MHC). Involved in the presentation of peptide antigens to the immune system. This is Beta-2-microglobulin (B2M) from Sus scrofa (Pig).